A 298-amino-acid chain; its full sequence is GTP cyclohydrolase FolE2 (298 aa).

Belongs to the GTP cyclohydrolase IV family.

The catalysed reaction is GTP + H2O = 7,8-dihydroneopterin 3'-triphosphate + formate + H(+). The protein operates within cofactor biosynthesis; 7,8-dihydroneopterin triphosphate biosynthesis; 7,8-dihydroneopterin triphosphate from GTP: step 1/1. Functionally, converts GTP to 7,8-dihydroneopterin triphosphate. The polypeptide is GTP cyclohydrolase FolE2 (Neisseria meningitidis serogroup B (strain ATCC BAA-335 / MC58)).